Reading from the N-terminus, the 339-residue chain is Phosphate acyltransferase (339 aa).

Belongs to the PlsX family. As to quaternary structure, homodimer. Probably interacts with PlsY.

The protein resides in the cytoplasm. It carries out the reaction a fatty acyl-[ACP] + phosphate = an acyl phosphate + holo-[ACP]. Its pathway is lipid metabolism; phospholipid metabolism. Its function is as follows. Catalyzes the reversible formation of acyl-phosphate (acyl-PO(4)) from acyl-[acyl-carrier-protein] (acyl-ACP). This enzyme utilizes acyl-ACP as fatty acyl donor, but not acyl-CoA. In Aeromonas salmonicida (strain A449), this protein is Phosphate acyltransferase.